A 257-amino-acid chain; its full sequence is MGQTIKEIKARLADLTDLSAKEFLEFETDERAGVQAALKSRKKQILAECAEDERLEQMLEFEKELYSQEIELIAGIDEVGRGPLAGPVVTAAVILPKNCKIRGLNDSKKVPKSKHHAILSEIQEKALAIGVGIVDAEKIDEVNIYEATKIAMIQAVSKLSLKPEHLLIDAMVLDLPIAQTKIIHGDARSASIAAASIVAKVTRDEMMKDFALEFPEYDFEHNAGYGTAKHLAALTKYGITRIHRKSYEPIKSMVNFK.

Residues glutamate 71–lysine 257 form the RNase H type-2 domain. Residues aspartate 77, glutamate 78, and aspartate 169 each coordinate a divalent metal cation.

The protein belongs to the RNase HII family. It depends on Mn(2+) as a cofactor. Mg(2+) is required as a cofactor.

The protein resides in the cytoplasm. It carries out the reaction Endonucleolytic cleavage to 5'-phosphomonoester.. Functionally, endonuclease that specifically degrades the RNA of RNA-DNA hybrids. The protein is Ribonuclease HII (rnhB) of Lactococcus lactis subsp. cremoris (strain MG1363).